We begin with the raw amino-acid sequence, 131 residues long: T3C protein (131 aa).

The sequence is that of T3C protein from Ovis aries (Sheep).